The following is a 542-amino-acid chain: Formate--tetrahydrofolate ligase (542 aa).

An ATP-binding site is contributed by 53–60 (TPAGEGKT).

The protein belongs to the formate--tetrahydrofolate ligase family.

The catalysed reaction is (6S)-5,6,7,8-tetrahydrofolate + formate + ATP = (6R)-10-formyltetrahydrofolate + ADP + phosphate. Its pathway is one-carbon metabolism; tetrahydrofolate interconversion. This chain is Formate--tetrahydrofolate ligase, found in Thermotoga maritima (strain ATCC 43589 / DSM 3109 / JCM 10099 / NBRC 100826 / MSB8).